The chain runs to 309 residues: Ferrochelatase (309 aa).

Residues His185 and Glu262 each coordinate Fe cation.

This sequence belongs to the ferrochelatase family.

The protein resides in the cytoplasm. The enzyme catalyses heme b + 2 H(+) = protoporphyrin IX + Fe(2+). It participates in porphyrin-containing compound metabolism; protoheme biosynthesis; protoheme from protoporphyrin-IX: step 1/1. In terms of biological role, catalyzes the ferrous insertion into protoporphyrin IX. In Campylobacter jejuni subsp. jejuni serotype O:6 (strain 81116 / NCTC 11828), this protein is Ferrochelatase.